The following is a 143-amino-acid chain: FIS1-related protein fis-1 (143 aa).

The helical transmembrane segment at 121-141 (LGLLGGAVAVVGGLVIAGLAF) threads the bilayer.

The protein belongs to the FIS1 family.

It localises to the mitochondrion outer membrane. The protein localises to the peroxisome membrane. In terms of biological role, involved in the fragmentation of the mitochondrial network. Involved in perinuclear clustering of the mitochondrial network. Plays a role in removal of ultraviolet C radiation-induced mitochondrial DNA damage. May act, redundantly with fis-2, downstream of mitochondrial fission, before the fission products participate in either mitochondrial homeostasis, mitophagy, or apoptosis. The protein is FIS1-related protein fis-1 of Caenorhabditis elegans.